Reading from the N-terminus, the 182-residue chain is CDP-diacylglycerol--glycerol-3-phosphate 3-phosphatidyltransferase (182 aa).

Over 2–12 (QFNIPTLLTLF) the chain is Cytoplasmic. Residues 13–37 (RVILIPFFVVVFYLPFAWAPMVSAL) form a helical membrane-spanning segment. The Periplasmic segment spans residues 38 to 60 (IFCIAAITDWFDGFLARRWNQST). A helical transmembrane segment spans residues 61–81 (RFGAFLDPVADKVLVAIAMVL). Topologically, residues 82–86 (VTEHY) are cytoplasmic. The chain crosses the membrane as a helical span at residues 87-107 (HSWWVTLPAATMIAREIIISA). The Periplasmic segment spans residues 108–145 (LREWMAELGKRSSVAVSWIGKVKTTAQMVALAWLLWRP). Residues 146–168 (NIWVEYAGIALFFVAAVLTLWSM) traverse the membrane as a helical segment. At 169–181 (LQYLSAARGDLLD) the chain is on the cytoplasmic side.

It belongs to the CDP-alcohol phosphatidyltransferase class-I family.

Its subcellular location is the cell inner membrane. It catalyses the reaction a CDP-1,2-diacyl-sn-glycerol + sn-glycerol 3-phosphate = a 1,2-diacyl-sn-glycero-3-phospho-(1'-sn-glycero-3'-phosphate) + CMP + H(+). Its pathway is phospholipid metabolism; phosphatidylglycerol biosynthesis; phosphatidylglycerol from CDP-diacylglycerol: step 1/2. In terms of biological role, catalyzes the conversion of cytidine diphosphate diacylglycerol (CDP-DG) and glycerol 3-phosphate into phosphatidylglycerol. Essential for the synthesis of anionic phospholipids, thereby playing a role in balancing the ratio of zwitterionic and anionic phospholipids, which is thought to be important for normal membrane function. The sequence is that of CDP-diacylglycerol--glycerol-3-phosphate 3-phosphatidyltransferase from Salmonella paratyphi A (strain ATCC 9150 / SARB42).